A 1183-amino-acid chain; its full sequence is Formin-like protein (1183 aa).

Disordered regions lie at residues 1–44 (MGAV…SISS) and 63–82 (QHVRQPSLRSRSQQPMPTTD). Over residues 23-36 (PHSHAHHHSMRNGH) the composition is skewed to basic residues. Positions 63–79 (QHVRQPSLRSRSQQPMP) are enriched in polar residues. Residues 76-559 (QPMPTTDELD…HNEQELKKRD (484 aa)) form the GBD/FH3 domain. Position 225 is a phosphoserine (Ser-225). A compositionally biased stretch (polar residues) spans 572-584 (LSRSLPRSASSGD). Positions 572-681 (LSRSLPRSAS…PPVAGFMPAP (110 aa)) are disordered. Pro residues-rich tracts occupy residues 605-614 (LPPPPPPMPA) and 622-640 (APPPPPPPAPPAPPPPPGF). Low complexity predominate over residues 641-654 (SPLGSPSGSLASTA). The FH2 domain occupies 687 to 1088 (IKRKVPTKYK…AALAASKKEN (402 aa)). The 34-residue stretch at 1136–1169 (DEVYNGALEDILLGLKSEPYRRADAVRRSQRRRI) folds into the DAD domain.

The protein belongs to the formin homology family. In terms of assembly, self-associates. Interacts (via GBD/FH3 domain) with Cdc42; the interaction is stronger with the GTP bound form of Cdc42.

Together with Cdc42, involved in establishment of planar cell polarity in the developing compound eye by contributing to ommatidial rotation. Together with DAAM and Cdc42, has a role in neuronal development of mushroom bodies. The polypeptide is Formin-like protein (Drosophila melanogaster (Fruit fly)).